A 155-amino-acid chain; its full sequence is RNA pyrophosphohydrolase (155 aa).

The Nudix hydrolase domain maps to 6 to 148; it reads GYRANVAIVL…KQEVYRKALT (143 aa). A Nudix box motif is present at residues 38–59; it reads GGVATGETPLQAMYRELHEEIG.

This sequence belongs to the Nudix hydrolase family. RppH subfamily. A divalent metal cation serves as cofactor.

Its function is as follows. Accelerates the degradation of transcripts by removing pyrophosphate from the 5'-end of triphosphorylated RNA, leading to a more labile monophosphorylated state that can stimulate subsequent ribonuclease cleavage. The protein is RNA pyrophosphohydrolase of Francisella tularensis subsp. tularensis (strain FSC 198).